Here is a 647-residue protein sequence, read N- to C-terminus: Threonine--tRNA ligase (647 aa).

The region spanning 1–61 (MIKITFPDGA…EEDGSIEIVT (61 aa)) is the TGS domain. The catalytic stretch occupies residues 240-538 (DHRKLGKELD…LIETYKGAFP (299 aa)). Cysteine 334, histidine 385, and histidine 515 together coordinate Zn(2+).

It belongs to the class-II aminoacyl-tRNA synthetase family. In terms of assembly, homodimer. Requires Zn(2+) as cofactor.

It localises to the cytoplasm. The enzyme catalyses tRNA(Thr) + L-threonine + ATP = L-threonyl-tRNA(Thr) + AMP + diphosphate + H(+). Functionally, catalyzes the attachment of threonine to tRNA(Thr) in a two-step reaction: L-threonine is first activated by ATP to form Thr-AMP and then transferred to the acceptor end of tRNA(Thr). Also edits incorrectly charged L-seryl-tRNA(Thr). The protein is Threonine--tRNA ligase of Streptococcus pyogenes serotype M4 (strain MGAS10750).